The sequence spans 328 residues: Ferredoxin--NADP reductase (328 aa).

FAD is bound by residues Ser-14, Glu-33, Gln-41, Tyr-46, Ile-90, and Phe-126.

The protein belongs to the ferredoxin--NADP reductase type 2 family. In terms of assembly, homodimer. Requires FAD as cofactor.

It carries out the reaction 2 reduced [2Fe-2S]-[ferredoxin] + NADP(+) + H(+) = 2 oxidized [2Fe-2S]-[ferredoxin] + NADPH. The chain is Ferredoxin--NADP reductase from Mycoplasmoides gallisepticum (strain R(low / passage 15 / clone 2)) (Mycoplasma gallisepticum).